Reading from the N-terminus, the 1559-residue chain is Arginine-glutamic acid dipeptide repeats protein (1559 aa).

Residues 1–36 (MTADKDKDKDKEKDRDRDRDRERDKRDKARESENAR) are compositionally biased toward basic and acidic residues. Residues 1-89 (MTADKDKDKD…KKKSRYERTD (89 aa)) form a disordered region. A phosphoserine mark is found at Ser-53 and Ser-56. Over residues 73-84 (KSRKKPPKKKSR) the composition is skewed to basic residues. The region spanning 102–282 (VVYRPGDCVY…PETRRLNSTQ (181 aa)) is the BAH domain. Thr-119 carries the post-translational modification Phosphothreonine. 2 positions are modified to phosphoserine: Ser-141 and Ser-303. The region spanning 283 to 386 (GEIRVGPSHQ…KALQRLVKKP (104 aa)) is the ELM2 domain. The region spanning 390 to 442 (LIEKCWTEDEVKRFVKGLRQYGKNFFRIRKELLPNKETGELITFYYYWKKTPE) is the SANT domain. Residues 463-494 (TRTASTPVNTPSRPPSSEFLDLSSASEDDFDS) form a disordered region. The span at 464 to 473 (RTASTPVNTP) shows a compositional bias: polar residues. The segment covering 478-487 (SSEFLDLSSA) has biased composition (low complexity). The segment at 507-532 (RHCFTTTSKDWHHGGRENILLCTDCR) adopts a GATA-type zinc-finger fold. Residues 541–1125 (LPPIEKPVDP…PSHASQSARF (585 aa)) are disordered. Residue Lys-559 forms a Glycyl lysine isopeptide (Lys-Gly) (interchain with G-Cter in SUMO2) linkage. Ser-593, Ser-599, and Ser-612 each carry phosphoserine. A compositionally biased stretch (low complexity) spans 608-622 (SGRNSPSAASTSSND). Basic and acidic residues predominate over residues 623–639 (SKAEAVKKSAKKVKEEA). A Glycyl lysine isopeptide (Lys-Gly) (interchain with G-Cter in SUMO2) cross-link involves residue Lys-636. Ser-641, Ser-655, Ser-674, and Ser-678 each carry phosphoserine. Positions 651 to 672 (EKVASDTEDTDRATSKKTKTQE) are enriched in basic and acidic residues. Over residues 687-707 (SDSRSVNDEGSSDPKDIDQDN) the composition is skewed to basic and acidic residues. The segment covering 708–735 (RSTSPSIPSPQDNESDSDSSAQQQMLQT) has biased composition (polar residues). Low complexity predominate over residues 736 to 761 (QPPALQAPSGAASAPSTAPPGTTQLP). Residues 768–791 (SATTVPPQGSPATSQPPNQTQSTV) show a composition bias toward polar residues. Positions 805–822 (LHPPRLPSPHPPLQPMTA) are enriched in pro residues. Positions 890–900 (QLPASQSALQP) are enriched in low complexity. A compositionally biased stretch (pro residues) spans 901-931 (QQPPREQPLPPAPLAMPHIKPPPTTPIPQLP). Positions 961–971 (KPLSSLSTHHP) are enriched in low complexity. Residues 1027-1053 (PQHPFVPGGPPPITPPSCPPTSTPPAG) are compositionally biased toward pro residues. Over residues 1054 to 1068 (PSSSSQPPCSAAVSS) the composition is skewed to low complexity. Ser-1098, Ser-1105, and Ser-1107 each carry phosphoserine. Residues 1098–1109 (SPPPPPRSPSPE) are compositionally biased toward pro residues. A Phosphothreonine modification is found at Thr-1111. Residues 1148-1205 (GSKLAKKREEAIEKAKREAEQKAREEREREKEKEKEREREREREREAERAAQKASSSA) adopt a coiled-coil conformation. The residue at position 1150 (Lys-1150) is an N6-acetyllysine. Over residues 1154-1198 (KREEAIEKAKREAEQKAREEREREKEKEKEREREREREREAERAA) the composition is skewed to basic and acidic residues. Residues 1154–1239 (KREEAIEKAK…TTIAAVPPYI (86 aa)) are disordered. A Phosphotyrosine modification is found at Tyr-1252. The residue at position 1259 (Ser-1259) is a Phosphoserine.

In terms of assembly, interacts with HDAC1 and ATN1. Interaction with ATN1 is improved when the poly-Gln region of ATN1 is extended. As to expression, widely expressed.

The protein localises to the nucleus. The protein resides in the PML body. Plays a role as a transcriptional repressor during development. May play a role in the control of cell survival. Interacts with FAT1. The protein is Arginine-glutamic acid dipeptide repeats protein (Rere) of Rattus norvegicus (Rat).